The following is a 240-amino-acid chain: Sugar fermentation stimulation protein homolog (240 aa).

Belongs to the SfsA family.

The protein is Sugar fermentation stimulation protein homolog of Natranaerobius thermophilus (strain ATCC BAA-1301 / DSM 18059 / JW/NM-WN-LF).